Consider the following 87-residue polypeptide: Small ribosomal subunit protein bS20 (87 aa).

This sequence belongs to the bacterial ribosomal protein bS20 family.

Its function is as follows. Binds directly to 16S ribosomal RNA. This chain is Small ribosomal subunit protein bS20, found in Sphingopyxis alaskensis (strain DSM 13593 / LMG 18877 / RB2256) (Sphingomonas alaskensis).